The following is a 649-amino-acid chain: WEB family protein At5g55860 (649 aa).

Coiled-coil stretches lie at residues 59–227 (EKVL…ACSQ), 267–356 (EFAK…IESV), and 391–461 (TINQ…MSEK). Over residues 443 to 453 (EAKAAETKALE) the composition is skewed to basic and acidic residues. The segment at 443-483 (EAKAAETKALEQIKSMSEKTNAARNSTSSESGSQSITLSQE) is disordered. The segment covering 456–467 (KSMSEKTNAARN) has biased composition (polar residues). Residues 468–482 (STSSESGSQSITLSQ) show a composition bias toward low complexity. The stretch at 505-549 (AALAQVEAVRASENETLKKLETTQEEIKKLKTATEEALKKAAMAD) forms a coiled coil. A disordered region spans residues 583–611 (MKMASESSPQQHYKAPKQKPVNNKLEKTK).

Belongs to the WEB family.

The chain is WEB family protein At5g55860 from Arabidopsis thaliana (Mouse-ear cress).